A 45-amino-acid polypeptide reads, in one-letter code: Large ribosomal subunit protein bL34c (45 aa).

It belongs to the bacterial ribosomal protein bL34 family.

It localises to the plastid. The protein resides in the chloroplast. In Emiliania huxleyi (Coccolithophore), this protein is Large ribosomal subunit protein bL34c.